Here is a 418-residue protein sequence, read N- to C-terminus: Gamma-glutamyl phosphate reductase (418 aa).

This sequence belongs to the gamma-glutamyl phosphate reductase family.

It is found in the cytoplasm. It carries out the reaction L-glutamate 5-semialdehyde + phosphate + NADP(+) = L-glutamyl 5-phosphate + NADPH + H(+). Its pathway is amino-acid biosynthesis; L-proline biosynthesis; L-glutamate 5-semialdehyde from L-glutamate: step 2/2. Functionally, catalyzes the NADPH-dependent reduction of L-glutamate 5-phosphate into L-glutamate 5-semialdehyde and phosphate. The product spontaneously undergoes cyclization to form 1-pyrroline-5-carboxylate. The sequence is that of Gamma-glutamyl phosphate reductase from Geotalea uraniireducens (strain Rf4) (Geobacter uraniireducens).